Consider the following 399-residue polypeptide: Semaphorin-like protein 139 (399 aa).

A signal peptide spans 1–14; that stretch reads MIPLLFILFYFTNC. In terms of domain architecture, Sema spans 15 to 399; sequence IEWHKFETSE…IPRMKKILKM (385 aa).

This sequence belongs to the semaphorin family. As to quaternary structure, interacts with host VESPR.

The protein localises to the secreted. Acts as a semaphorin-like protein and binds to host plexin C1 receptor. May alter the movement of plexin C1-expressing cells including dendritic cells, monocytes, or granulocytes in the proximity of infected cells. May also regulate host cell cytoskeleton of neighboring cells to improve viral infection. In Ectromelia virus (strain Moscow) (ECTV), this protein is Semaphorin-like protein 139 (EVM139).